The primary structure comprises 149 residues: Probable flagellum biosynthesis repressor protein FlbT (149 aa).

Belongs to the FlbT family.

Functionally, has a post-transcriptional repressor function in flagellum biogenesis. Associates with the 5'-UTR of fljK mRNA and promotes its degradation. This is Probable flagellum biosynthesis repressor protein FlbT from Rhizobium johnstonii (strain DSM 114642 / LMG 32736 / 3841) (Rhizobium leguminosarum bv. viciae).